The primary structure comprises 404 residues: High affinity immunoglobulin gamma Fc receptor I (404 aa).

Positions Met1 to Gly24 are cleaved as a signal peptide. The Extracellular portion of the chain corresponds to Glu25–Pro297. Asn28, Asn48, Asn69, Asn168, and Asn249 each carry an N-linked (GlcNAc...) asparagine glycan. 3 Ig-like C2-type domains span residues Ala32–His111, Leu117–Val194, and Pro201–Glu286. Disulfide bonds link Cys53–Cys95, Cys134–Cys177, and Cys221–Cys269. The helical transmembrane segment at Val298 to Val320 threads the bilayer. The tract at residues Lys321 to Gly342 is interaction with EPB41L2. Residues Lys321 to Ser404 are Cytoplasmic-facing. Residues Asn346–Ser404 form a disordered region. Ser347 is subject to Phosphoserine. Thr368 carries the phosphothreonine modification. Residues Ser394–Ser404 show a composition bias toward polar residues.

This sequence belongs to the immunoglobulin superfamily. FCGR1 family. As to quaternary structure, interacts with FCERG1; forms a functional signaling complex. Interacts with FLNA; prevents FCGR1A degradation. Interacts with EPB41L2, LAT and PPL. Interacts with HCK and LYN. In terms of processing, N-glycosylated. Post-translationally, phosphorylated on serine residues. Macrophage-specific.

The protein localises to the cell membrane. High affinity receptor for the Fc region of immunoglobulins gamma. Functions in both innate and adaptive immune responses. The polypeptide is High affinity immunoglobulin gamma Fc receptor I (Fcgr1) (Mus musculus (Mouse)).